A 154-amino-acid chain; its full sequence is Leghemoglobin-1 (154 aa).

A Globin domain is found at 3–151; the sequence is VLTDVQVALV…LAIIIKKEMK (149 aa). A heme b-binding site is contributed by Ser46. Ser46 carries the phosphoserine modification. Residue His64 participates in O2 binding. Positions 67, 98, and 101 each coordinate heme b. Tyr139 carries the nitrated tyrosine modification.

The protein belongs to the plant globin family. As to quaternary structure, monomer. In terms of processing, nitrated in effective nodules and particularly in hypoxic conditions; this mechanism may play a protective role in the symbiosis by buffering toxic peroxynitrite NO(2)(-). Nitration level decrease during nodule senescence. Phosphorylation at Ser-46 disrupts the molecular environment of its porphyrin ring oxygen binding pocket, thus leading to a reduced oxygen consumption and to the delivery of oxygen O(2) to symbiosomes. In terms of tissue distribution, accumulates in developing root nodules and present in roots, especially in the upper part. Detected in leaves at low levels.

It localises to the cytoplasm. The protein resides in the cytosol. It is found in the nucleus. In terms of biological role, leghemoglobin that reversibly binds oxygen O(2) through a pentacoordinated heme iron. In root nodules, facilitates the diffusion of oxygen to the bacteroids while preventing the bacterial nitrogenase from being inactivated by buffering dioxygen, nitric oxide and carbon monoxide, and promoting the formation of reactive oxygen species (ROS, e.g. H(2)O(2)). This role is essential for symbiotic nitrogen fixation (SNF). The protein is Leghemoglobin-1 of Lupinus luteus (European yellow lupine).